A 225-amino-acid polypeptide reads, in one-letter code: MASPSSLCLLTALLALVSWQTIASDPSPLQDFCVADEHSPVLVNGFACLDPKHVNADHFFKAAMLDTPRKTNKVGSNVTLINVMQIPGLNTLGISIARIDYAPLGQNPPHTHPRATEILTVLEGTLYVGFVTSNPNNTLFSKVLKKGDVFVFPVGLIHFQFNPNPHQPAVAIAALSSQNPGAITIANAVFGSKPPISDEVLAKAFQVEKGTIDWLQAQFWENNHY.

Residues 1-23 (MASPSSLCLLTALLALVSWQTIA) form the signal peptide. A disulfide bridge links C33 with C48. The 151-residue stretch at 63–213 (AMLDTPRKTN…AFQVEKGTID (151 aa)) folds into the Cupin type-1 domain. A glycan (N-linked (GlcNAc...) asparagine) is linked at N77. Mn(2+) is bound by residues H110, H112, and E117. N136 carries N-linked (GlcNAc...) asparagine glycosylation. H158 serves as a coordination point for Mn(2+).

Belongs to the germin family. In terms of assembly, oligomer (believed to be a pentamer but probably hexamer).

Its subcellular location is the secreted. It localises to the extracellular space. The protein localises to the apoplast. Functionally, plays a role in broad-spectrum disease resistance. Probably has no oxalate oxidase activity even if the active site is conserved. This chain is Germin-like protein 8-6, found in Oryza sativa subsp. japonica (Rice).